The primary structure comprises 102 residues: NADH-quinone oxidoreductase subunit K (102 aa).

3 helical membrane passes run 6-26 (MEHGLLLAAVLFCIGLCGLLI), 30-50 (LLFILMSIEIMMNASALAFVV), and 65-85 (ILVISLAAAEASIGLALLLLL).

This sequence belongs to the complex I subunit 4L family. In terms of assembly, NDH-1 is composed of 14 different subunits. Subunits NuoA, H, J, K, L, M, N constitute the membrane sector of the complex.

The protein localises to the cell inner membrane. It carries out the reaction a quinone + NADH + 5 H(+)(in) = a quinol + NAD(+) + 4 H(+)(out). Functionally, NDH-1 shuttles electrons from NADH, via FMN and iron-sulfur (Fe-S) centers, to quinones in the respiratory chain. The immediate electron acceptor for the enzyme in this species is believed to be ubiquinone. Couples the redox reaction to proton translocation (for every two electrons transferred, four hydrogen ions are translocated across the cytoplasmic membrane), and thus conserves the redox energy in a proton gradient. The protein is NADH-quinone oxidoreductase subunit K of Aeromonas hydrophila subsp. hydrophila (strain ATCC 7966 / DSM 30187 / BCRC 13018 / CCUG 14551 / JCM 1027 / KCTC 2358 / NCIMB 9240 / NCTC 8049).